The sequence spans 136 residues: Ribosome-binding factor A (136 aa).

The disordered stretch occupies residues 114–136 (DRANRPGPAADEPDEPDEPEDRR). Over residues 124–136 (DEPDEPDEPEDRR) the composition is skewed to acidic residues.

Belongs to the RbfA family. Monomer. Binds 30S ribosomal subunits, but not 50S ribosomal subunits or 70S ribosomes.

It localises to the cytoplasm. Functionally, one of several proteins that assist in the late maturation steps of the functional core of the 30S ribosomal subunit. Associates with free 30S ribosomal subunits (but not with 30S subunits that are part of 70S ribosomes or polysomes). Required for efficient processing of 16S rRNA. May interact with the 5'-terminal helix region of 16S rRNA. This Bordetella petrii (strain ATCC BAA-461 / DSM 12804 / CCUG 43448) protein is Ribosome-binding factor A.